Here is a 116-residue protein sequence, read N- to C-terminus: Diuretic hormone class 2 (116 aa).

Positions 1–25 (MTNRCACFALAFLLFCLLAISSIEA) are cleaved as a signal peptide. A propeptide spanning residues 26 to 75 (APMPSQSNGGYGGAGYNELEEVPDDLLMELMTRFGRTIIRARNDLENSKR) is cleaved from the precursor. Proline 106 carries the post-translational modification Proline amide. A propeptide spanning residues 112-116 (SETDV) is cleaved from the precursor.

The protein localises to the secreted. In terms of biological role, regulation of fluid secretion. Stimulates Malpighian tubules fluid secretion by activating the apical membrane V-ATPase via cyclic AMP of principal cells in the main secretory segment. The sequence is that of Diuretic hormone class 2 (Dh31) from Drosophila melanogaster (Fruit fly).